The chain runs to 105 residues: uncharacterized protein (105 aa).

At serine 2 the chain carries N-acetylserine.

This is an uncharacterized protein from Saccharomyces cerevisiae (strain ATCC 204508 / S288c) (Baker's yeast).